A 292-amino-acid chain; its full sequence is Ribosomal RNA small subunit methyltransferase I (292 aa).

This sequence belongs to the methyltransferase superfamily. RsmI family.

It localises to the cytoplasm. The enzyme catalyses cytidine(1402) in 16S rRNA + S-adenosyl-L-methionine = 2'-O-methylcytidine(1402) in 16S rRNA + S-adenosyl-L-homocysteine + H(+). Catalyzes the 2'-O-methylation of the ribose of cytidine 1402 (C1402) in 16S rRNA. This chain is Ribosomal RNA small subunit methyltransferase I, found in Buchnera aphidicola subsp. Baizongia pistaciae (strain Bp).